A 172-amino-acid chain; its full sequence is Disulfide bond formation protein B (172 aa).

Residues 1-13 are Cytoplasmic-facing; it reads MNWLAQLPTQRTP. The helical transmembrane segment at 14–30 threads the bilayer; sequence WLLFSGIVFLLEITALF. The Periplasmic portion of the chain corresponds to 31 to 48; it reads FQYKMGLAPCIMCIYQRT. Cysteine 40 and cysteine 43 are joined by a disulfide. A helical transmembrane segment spans residues 49–64; that stretch reads AVLGLLIAGIIGTSNP. The Cytoplasmic segment spans residues 65 to 71; that stretch reads EHRGVRL. The helical transmembrane segment at 72–89 threads the bilayer; sequence LAYSVWAVSSVWGFIIAR. Residues 90–145 lie on the Periplasmic side of the membrane; sequence EHIEMQTTTDPFAFSCEFEPNFPAFMPLHEWIPSFFAATGDCGNIDWQFAGLSMPA. Cysteine 105 and cysteine 131 are joined by a disulfide. A helical membrane pass occupies residues 146–164; it reads WMEVIFALFAATLFLLVTS. Residues 165–172 are Cytoplasmic-facing; sequence RLMTKRSL.

It belongs to the DsbB family.

It is found in the cell inner membrane. In terms of biological role, required for disulfide bond formation in some periplasmic proteins. Acts by oxidizing the DsbA protein. This is Disulfide bond formation protein B from Pseudoalteromonas translucida (strain TAC 125).